Reading from the N-terminus, the 32-residue chain is GILDSFKGVAKGVAKDLAGKLLDKLKCKITGC.

Cys-27 and Cys-32 are disulfide-bonded.

As to expression, expressed by the skin glands.

Its subcellular location is the secreted. Functionally, antibacterial activity against Gram-positive bacterium S.aureus and Gram-negative bacterium E.coli. Weak activity against C.albicans. This is Ranatuerin-2La from Rana luteiventris (Columbia spotted frog).